A 212-amino-acid chain; its full sequence is Uracil phosphoribosyltransferase (212 aa).

5-phospho-alpha-D-ribose 1-diphosphate contacts are provided by residues Arg-78, Arg-103, and 130–138 (DPMLATGGS). Uracil-binding positions include Ile-193 and 198-200 (GDA). Asp-199 contacts 5-phospho-alpha-D-ribose 1-diphosphate.

This sequence belongs to the UPRTase family. The cofactor is Mg(2+).

The catalysed reaction is UMP + diphosphate = 5-phospho-alpha-D-ribose 1-diphosphate + uracil. Its pathway is pyrimidine metabolism; UMP biosynthesis via salvage pathway; UMP from uracil: step 1/1. With respect to regulation, allosterically activated by GTP. Catalyzes the conversion of uracil and 5-phospho-alpha-D-ribose 1-diphosphate (PRPP) to UMP and diphosphate. This is Uracil phosphoribosyltransferase from Stutzerimonas stutzeri (strain A1501) (Pseudomonas stutzeri).